Here is a 390-residue protein sequence, read N- to C-terminus: Queuine tRNA-ribosyltransferase (390 aa).

Residue Asp-92 is the Proton acceptor of the active site. Substrate contacts are provided by residues 92–96 (DSGGF), Asp-146, Gln-195, and Gly-222. Residues 253–259 (GVGTPED) form an RNA binding region. Asp-272 acts as the Nucleophile in catalysis. The tract at residues 277-281 (TRNAR) is RNA binding; important for wobble base 34 recognition. Positions 310, 312, 315, and 354 each coordinate Zn(2+).

It belongs to the queuine tRNA-ribosyltransferase family. As to quaternary structure, homodimer. Within each dimer, one monomer is responsible for RNA recognition and catalysis, while the other monomer binds to the replacement base PreQ1. Requires Zn(2+) as cofactor.

The enzyme catalyses 7-aminomethyl-7-carbaguanine + guanosine(34) in tRNA = 7-aminomethyl-7-carbaguanosine(34) in tRNA + guanine. It participates in tRNA modification; tRNA-queuosine biosynthesis. Its function is as follows. Catalyzes the base-exchange of a guanine (G) residue with the queuine precursor 7-aminomethyl-7-deazaguanine (PreQ1) at position 34 (anticodon wobble position) in tRNAs with GU(N) anticodons (tRNA-Asp, -Asn, -His and -Tyr). Catalysis occurs through a double-displacement mechanism. The nucleophile active site attacks the C1' of nucleotide 34 to detach the guanine base from the RNA, forming a covalent enzyme-RNA intermediate. The proton acceptor active site deprotonates the incoming PreQ1, allowing a nucleophilic attack on the C1' of the ribose to form the product. After dissociation, two additional enzymatic reactions on the tRNA convert PreQ1 to queuine (Q), resulting in the hypermodified nucleoside queuosine (7-(((4,5-cis-dihydroxy-2-cyclopenten-1-yl)amino)methyl)-7-deazaguanosine). In Acidovorax ebreus (strain TPSY) (Diaphorobacter sp. (strain TPSY)), this protein is Queuine tRNA-ribosyltransferase.